We begin with the raw amino-acid sequence, 7524 residues long: Mucin-19 (7524 aa).

An N-terminal signal peptide occupies residues 1-20 (MKLILLYLAVVLCFVGKGAA). The segment at 20 to 47 (ARSPTTTRTPTPSTSEKASHVPEATPTY) is disordered. The span at 21–34 (RSPTTTRTPTPSTS) shows a compositional bias: low complexity. In terms of domain architecture, VWFD 1 spans 55–225 (GEATMWGKDK…VCEDGVQYCD (171 aa)). A disulfide bond links Cys79 and Cys224. In terms of domain architecture, TIL spans 298–353 (CPGKHIYKECGPSNPPTCSNVAPFQDSECVSGCTCPEGYLLDDIGEKGKCVLKEKC). 2 consecutive VWFD domains span residues 392 to 568 (GICK…EGSP) and 851 to 1025 (STCH…QECS). Intrachain disulfides connect Cys394-Cys529, Cys434-Cys442, Cys853-Cys989, Cys875-Cys1024, Cys884-Cys986, and Cys900-Cys907. Low complexity predominate over residues 1244 to 1261 (AAATRASSSTSGSVETSV). 2 disordered regions span residues 1244 to 7217 (AAAT…SSLA) and 7249 to 7297 (SVIK…CPDS). Residues 1262–1289 (PATTSTSKAQAHITTASSTETSALNSTA) show a composition bias toward polar residues. Low complexity-rich tracts occupy residues 1320–7099 (PAVS…AGSG) and 7112–7217 (STSG…SSLA). A run of 36 repeats spans residues 1321 to 1483 (AVST…TTGP), 1484 to 1646 (AVST…TTGP), 1647 to 1809 (AVST…TTGP), 1810 to 1972 (AVST…TTGP), 1973 to 2135 (AVST…TTGP), 2136 to 2298 (AVST…TTGP), 2299 to 2461 (AVST…TTGP), 2462 to 2624 (AVST…TTGP), 2625 to 2787 (AVST…TTGP), 2788 to 2950 (AVST…TTGP), 2951 to 3113 (AVST…TTGP), 3114 to 3276 (AVST…TTGP), 3277 to 3439 (AVST…TTGP), 3440 to 3602 (AVST…TTGP), 3603 to 3765 (AVST…TTGP), 3766 to 3928 (AVST…TTGP), 3929 to 4091 (AVST…TTGP), 4092 to 4254 (AVST…TTGP), 4255 to 4417 (AVST…TTGP), 4418 to 4580 (AVST…TTGP), 4581 to 4743 (AVST…TTGP), 4744 to 4906 (AVST…TTGP), 4907 to 5069 (AVST…TTGP), 5070 to 5232 (AVST…TTGP), 5233 to 5395 (AVST…TTGP), 5396 to 5558 (AVST…TTGP), 5559 to 5721 (AVST…TTGP), 5722 to 5884 (AVST…TTGP), 5885 to 6047 (AVST…TTGP), 6048 to 6210 (AVST…TTGP), 6211 to 6373 (AVST…TTGP), 6374 to 6536 (AVST…TTGP), 6537 to 6699 (AVST…TTGP), 6700 to 6862 (AVST…TTGP), 6863 to 7025 (AVST…TTGP), and 7026 to 7188 (AVST…TTGP). Residues 1321–7188 (AVSTTSAGST…AETAGSTTGP (5868 aa)) form an approximate repeats region. Polar residues predominate over residues 7261 to 7291 (AKSNETTGRTTSMPASTSVAPGVTTSPNISQ). 2 VWFC domains span residues 7302-7368 (PVCH…GHCE) and 7370-7432 (RTCL…YKCK). Cystine bridges form between Cys7435–Cys7482, Cys7449–Cys7496, Cys7458–Cys7512, and Cys7462–Cys7514. In terms of domain architecture, CTCK spans 7435–7519 (CRTTPVNVTV…TTCSCRDQCE (85 aa)).

Specifically expressed in sublingual salivary glands. Expressed by mucous cells of the submandibular gland and submucosal gland of the trachea. Expression is altered in sld (sublingual gland differentiation arrest) mutants.

Its subcellular location is the secreted. Functionally, may function in ocular mucus homeostasis. This is Mucin-19 (Muc19) from Mus musculus (Mouse).